The chain runs to 198 residues: Nascent polypeptide-associated complex subunit alpha (198 aa).

Positions 48–113 (ITRVVLKRTR…QAAAETGSVS (66 aa)) constitute an NAC-A/B domain. Residues 159–198 (LEDSDIKLVMEQANVSRNKAINGLKKNDSDVVNTIMDLCK) form the UBA domain.

The protein belongs to the NAC-alpha family. Part of the nascent polypeptide-associated complex (NAC), consisting of EGD2 and EGD1. NAC associates with ribosomes via EGD1.

Its subcellular location is the cytoplasm. The protein localises to the nucleus. Its function is as follows. Component of the nascent polypeptide-associated complex (NAC), a dynamic component of the ribosomal exit tunnel, protecting the emerging polypeptides from interaction with other cytoplasmic proteins to ensure appropriate nascent protein targeting. The NAC complex also promotes mitochondrial protein import by enhancing productive ribosome interactions with the outer mitochondrial membrane and blocks the inappropriate interaction of ribosomes translating non-secretory nascent polypeptides with translocation sites in the membrane of the endoplasmic reticulum. EGD2 may also be involved in transcription regulation. This chain is Nascent polypeptide-associated complex subunit alpha (EGD2), found in Yarrowia lipolytica (strain CLIB 122 / E 150) (Yeast).